We begin with the raw amino-acid sequence, 937 residues long: MSDYKTTLNLPETGFPMRGDLAKREPDMLKRWYEQDLYGIIRNAKKGKKTFILHDGPPYANGSIHIGHSVNKILKDIIVKSKGLSGYDSPYVPGWDCHGLPIELKVEQLIGKPGEKVSAAEFRAECRKYAAEQVAGQKADFIRLGVLGDWDRPYLTMDFKTEANIIRALGRIIENGHLHKGAKPVHWCADCGSALAEAEVEYYDKTSPSIDVTFNASDVAAVLAKFGVSRVDGPISLVIWTTTPWTLPANRAISLNAEFDYQLVQIDGQALILAADLVESVMKRVGVTQWIVLGDCKGADLELLRFKHPFLGFDVPAILGDHVTLDAGTGAVHTAGGHGPDDYVISQKYNLEIANPVGPNGCYLSGTYPELDGKFVFKANDLIVEILREKSMLLHVEKLQHSYPCCWRHKSPIIFRATPQWFVSMDQKGLRKQSLSEIKDVQWIPDWGQARIEAMVANRPDWCISRQRTWGVPMSLFVHKETEELHPRTAELIEAVAKRVEADGIQAWWDLDPADVLGADADNYVKVPDTLDVWFDSGSTHASVVDVRPEFGGHEADMYLEGSDQHRGWFMSSLMISTAIKGKAPYRQVLTHGFTVDGQGRKMSKSIGNTVSPQDVMNKLGADILRLWIGSTDYSGEIAVSDEILKRSADAYRRIRNTARFLLANLNGFDPQKDSVKPEDMVVLDRWAVGCAKAAQDEILEAYESYDFHRVVQRLMQFCSIEMGSFYLDIIKDRQYTAKGDSVARRSCQTALYHISEALVRWMAPIMSFTADELWNYLPGERAQYVFTEEWYDGLFALDASETMNDAFWADVLKVRSEVNKVIEQARNDKRIGGSLEASVTLYADANLADKLNQLRQELHFALLTSKARVERYENAPDSAQATELTGLKIALSEAEGHKCPRCWHYETDIGSNADHPEVCGRCATNVGGNGEERKFV.

Positions 58–68 match the 'HIGH' region motif; it reads PYANGSIHIGH. Residue glutamate 561 coordinates L-isoleucyl-5'-AMP. The 'KMSKS' region signature appears at 602 to 606; sequence KMSKS. Lysine 605 provides a ligand contact to ATP. Zn(2+) is bound by residues cysteine 900, cysteine 903, cysteine 920, and cysteine 923.

It belongs to the class-I aminoacyl-tRNA synthetase family. IleS type 1 subfamily. As to quaternary structure, monomer. Zn(2+) serves as cofactor.

Its subcellular location is the cytoplasm. The catalysed reaction is tRNA(Ile) + L-isoleucine + ATP = L-isoleucyl-tRNA(Ile) + AMP + diphosphate. Catalyzes the attachment of isoleucine to tRNA(Ile). As IleRS can inadvertently accommodate and process structurally similar amino acids such as valine, to avoid such errors it has two additional distinct tRNA(Ile)-dependent editing activities. One activity is designated as 'pretransfer' editing and involves the hydrolysis of activated Val-AMP. The other activity is designated 'posttransfer' editing and involves deacylation of mischarged Val-tRNA(Ile). This chain is Isoleucine--tRNA ligase, found in Pectobacterium atrosepticum (strain SCRI 1043 / ATCC BAA-672) (Erwinia carotovora subsp. atroseptica).